We begin with the raw amino-acid sequence, 606 residues long: Putative mitochondrial ATP-dependent helicase irc3 (606 aa).

The Helicase ATP-binding domain maps to 40-201 (NAFDEGKRRI…ACGLDEIVYH (162 aa)). 53–60 (LATGSGKT) lines the ATP pocket. The DEAH box motif lies at 148 to 151 (DEVH). The 153-residue stretch at 246-398 (QSEKAIFEIP…LSPDEVENFY (153 aa)) folds into the Helicase C-terminal domain.

Belongs to the helicase family. IRC3 subfamily.

It is found in the mitochondrion. This is Putative mitochondrial ATP-dependent helicase irc3 (irc3) from Schizosaccharomyces pombe (strain 972 / ATCC 24843) (Fission yeast).